Consider the following 664-residue polypeptide: Protein LYK5 (664 aa).

Residues 1–26 (MAACTLHALSVTLFLLLFFAVSPAKA) form the signal peptide. Residues 27–277 (QQPYVNNHQL…DPPGSSSSHK (251 aa)) lie on the Extracellular side of the membrane. 5 N-linked (GlcNAc...) asparagine glycosylation sites follow: Asn45, Asn81, Asn111, Asn125, and Asn129. 3 cysteine pairs are disulfide-bonded: Cys52/Cys114, Cys58/Cys181, and Cys112/Cys179. Residue 135-141 (GDETYFS) participates in chitin binding. A glycan (N-linked (GlcNAc...) asparagine) is linked at Asn144. Residue 164–170 (ERQLTPG) participates in chitin binding. Residues 195–238 (LTYLVAMGDSISGIAEMFNSTSAAITEGNELTSDNIFFFTPVLV) form the LysM domain. The N-linked (GlcNAc...) asparagine glycan is linked to Asn213. The segment covering 251–269 (PSPPPPPVVATPPQTPVDP) has biased composition (pro residues). Residues 251-270 (PSPPPPPVVATPPQTPVDPP) form a disordered region. Residues 278–298 (WIYIGIGIGAGLLLLLSILAL) form a helical membrane-spanning segment. The Cytoplasmic portion of the chain corresponds to 299–664 (CFYKRRSKKK…DLLRSGSLGN (366 aa)). Positions 351-643 (KSAIESLTLY…TQVLTTLSMI (293 aa)) constitute a Protein kinase domain. ATP contacts are provided by residues 357 to 365 (LTLYRFNDL) and Lys395.

The protein belongs to the protein kinase superfamily. Ser/Thr protein kinase family.

Its subcellular location is the cell membrane. Its function is as follows. May recognize microbe-derived N-acetylglucosamine (NAG)-containing ligands. This chain is Protein LYK5 (LYK5), found in Arabidopsis thaliana (Mouse-ear cress).